Consider the following 58-residue polypeptide: Large ribosomal subunit protein eL37 (58 aa).

The span at 1–17 (MTGAGTPSQGKKNTTTH) shows a compositional bias: polar residues. The tract at residues 1–26 (MTGAGTPSQGKKNTTTHTKCRRCGEK) is disordered. Residues Cys20, Cys23, Cys35, and Cys38 each coordinate Zn(2+). Residues 20–38 (CRRCGEKSYHTKKKVCSSC) form a C4-type zinc finger.

Belongs to the eukaryotic ribosomal protein eL37 family. Requires Zn(2+) as cofactor.

Binds to the 23S rRNA. The protein is Large ribosomal subunit protein eL37 of Halobacterium salinarum (strain ATCC 29341 / DSM 671 / R1).